A 489-amino-acid polypeptide reads, in one-letter code: Ribonuclease G (489 aa).

One can recognise an S1 motif domain in the interval 39–128 (GNIYKGRVSR…LTTDITLPSR (90 aa)). Asp304 and Asp347 together coordinate Mg(2+).

It belongs to the RNase E/G family. RNase G subfamily. As to quaternary structure, homodimer, and possible higher multimers. Mg(2+) is required as a cofactor.

Its subcellular location is the cytoplasm. In terms of biological role, acts in the processing of the 5'-end of precursors of 16S rRNA. Confers adaptive resistance to aminoglycoside antibiotics through modulation of 16S rRNA processing. An endoribonuclease, it prefers 5'-monophosphorylated substrates and cleaves single-stranded sites rich in A and U residues; also contributes to 23S rRNA processing, tRNA processing and mRNA turnover. Involved in decay of speF mRNA, has a preference for adenine nucleotides. This is Ribonuclease G from Salmonella typhimurium (strain SL1344).